Here is a 338-residue protein sequence, read N- to C-terminus: Biotin synthase (338 aa).

A Radical SAM core domain is found at 50-277; sequence QAVQLSTLMS…KSYVRLSAGR (228 aa). 3 residues coordinate [4Fe-4S] cluster: cysteine 65, cysteine 69, and cysteine 72. Cysteine 109, cysteine 140, cysteine 200, and arginine 272 together coordinate [2Fe-2S] cluster.

This sequence belongs to the radical SAM superfamily. Biotin synthase family. In terms of assembly, homodimer. It depends on [4Fe-4S] cluster as a cofactor. [2Fe-2S] cluster serves as cofactor.

It carries out the reaction (4R,5S)-dethiobiotin + (sulfur carrier)-SH + 2 reduced [2Fe-2S]-[ferredoxin] + 2 S-adenosyl-L-methionine = (sulfur carrier)-H + biotin + 2 5'-deoxyadenosine + 2 L-methionine + 2 oxidized [2Fe-2S]-[ferredoxin]. It functions in the pathway cofactor biosynthesis; biotin biosynthesis; biotin from 7,8-diaminononanoate: step 2/2. In terms of biological role, catalyzes the conversion of dethiobiotin (DTB) to biotin by the insertion of a sulfur atom into dethiobiotin via a radical-based mechanism. The polypeptide is Biotin synthase (Actinobacillus succinogenes (strain ATCC 55618 / DSM 22257 / CCUG 43843 / 130Z)).